The sequence spans 378 residues: UPF0754 membrane protein BCA_0919 (378 aa).

A run of 2 helical transmembrane segments spans residues 1–21 (MNIW…GGFT) and 357–377 (YLGA…LLFL).

It belongs to the UPF0754 family.

The protein resides in the cell membrane. This Bacillus cereus (strain 03BB102) protein is UPF0754 membrane protein BCA_0919.